A 400-amino-acid chain; its full sequence is MSESVRTNTSIWSKGMLSVIVAQFLSAFGDNALLFATLALLKAQFYPDWSQPVLQMVFVGAYILFAPFVGQIADSFAKGRVMMVANGLKLAGAAGICLGVNPFVGYTLVGIGAAAYSPAKYGILGELTTGDKLVKANGLMEASTIAAILLGSVAGGVLADWHVIAALVACALAYAGAVAANLFIPKLVAARPGQSWRLSAMTRSFFSACVVLWRNGETRFSLVGTGLFWGAGVTLRFLLVLWVPVALGITDNATPTYLNAMVAVGIVVGAGAAAKLVTLETVSRCMPAGILIGVVVAIFSLQHALLPAYALLLLIGMLGGFFVVPLNALLQERGKKSVGAGNAIAVQNLGENSAMLLMLGLYSLAVLVGVPAVAIGIGFGVLFALAIAALWIWQRRQASY.

12 helical membrane passes run 19-39, 53-73, 91-111, 139-159, 164-184, 195-213, 227-247, 257-277, 281-301, 304-324, 352-372, and 373-393; these read VIVAQFLSAFGDNALLFATLA, VLQMVFVGAYILFAPFVGQIA, AGAAGICLGVNPFVGYTLVGI, LMEASTIAAILLGSVAGGVLA, IAALVACALAYAGAVAANLFI, SWRLSAMTRSFFSACVVLW, LFWGAGVTLRFLLVLWVPVAL, YLNAMVAVGIVVGAGAAAKLV, TVSRCMPAGILIGVVVAIFSL, ALLPAYALLLLIGMLGGFFVV, NSAMLLMLGLYSLAVLVGVPA, and VAIGIGFGVLFALAIAALWIW.

It belongs to the major facilitator superfamily. LplT (TC 2.A.1.42) family.

The protein resides in the cell inner membrane. In terms of biological role, catalyzes the facilitated diffusion of 2-acyl-glycero-3-phosphoethanolamine (2-acyl-GPE) into the cell. The chain is Lysophospholipid transporter LplT from Salmonella agona (strain SL483).